A 164-amino-acid polypeptide reads, in one-letter code: UPF0303 protein RHECIAT_CH0003058 (164 aa).

It belongs to the UPF0303 family.

This chain is UPF0303 protein RHECIAT_CH0003058, found in Rhizobium etli (strain CIAT 652).